We begin with the raw amino-acid sequence, 180 residues long: Large ribosomal subunit protein uL6 (180 aa).

This sequence belongs to the universal ribosomal protein uL6 family. In terms of assembly, part of the 50S ribosomal subunit.

Its function is as follows. This protein binds to the 23S rRNA, and is important in its secondary structure. It is located near the subunit interface in the base of the L7/L12 stalk, and near the tRNA binding site of the peptidyltransferase center. This is Large ribosomal subunit protein uL6 from Protochlamydia amoebophila (strain UWE25).